Consider the following 186-residue polypeptide: uncharacterized protein (186 aa).

The segment at 156–186 (DTKELERTTQPPEHQKHHQEPREKRGMNKRD) is disordered. The segment covering 173 to 186 (HQEPREKRGMNKRD) has biased composition (basic and acidic residues).

This is an uncharacterized protein from Bacillus subtilis (strain 168).